The primary structure comprises 497 residues: Peptidoglycan endopeptidase RipA (497 aa).

Residues 1-39 form the signal peptide; that stretch reads MRRTVRALATRVHGRVCAVPLVVGMLLATALYGGGPAAA. Over residues 177–192 the composition is skewed to basic and acidic residues; sequence ARLAKEKADQAARDAE. Disordered regions lie at residues 177–198 and 253–297; these read ARLAKEKADQAARDAESSQDNA and APAA…GQNW. The segment covering 255–273 has biased composition (pro residues); sequence AAAPAPVPNSAPAPVPGAQ. Residues 365–497 enclose the NlpC/P60 domain; it reads REAVEYVIRR…TPYVTRLIEY (133 aa). The active-site Nucleophile is C408. The Proton acceptor role is filled by H457. Residue E469 is part of the active site.

The protein belongs to the peptidase C40 family. Monomer.

It is found in the secreted. Peptidoglycan endopeptidase that cleaves the bond between D-glutamate and meso-diaminopimelate. Binds and degrades high-molecular weight peptidoglycan. Required for normal separation of daughter cells after cell division and for cell wall integrity. The polypeptide is Peptidoglycan endopeptidase RipA (ripA) (Mycolicibacterium smegmatis (strain ATCC 700084 / mc(2)155) (Mycobacterium smegmatis)).